The primary structure comprises 346 residues: 4-hydroxy-3-methylbut-2-enyl diphosphate reductase (346 aa).

Cys19 is a [4Fe-4S] cluster binding site. Residues His48 and His84 each contribute to the (2E)-4-hydroxy-3-methylbut-2-enyl diphosphate site. Dimethylallyl diphosphate-binding residues include His48 and His84. Isopentenyl diphosphate-binding residues include His48 and His84. Cys106 is a [4Fe-4S] cluster binding site. His134 contributes to the (2E)-4-hydroxy-3-methylbut-2-enyl diphosphate binding site. His134 serves as a coordination point for dimethylallyl diphosphate. An isopentenyl diphosphate-binding site is contributed by His134. Glu136 serves as the catalytic Proton donor. Position 175 (Thr175) interacts with (2E)-4-hydroxy-3-methylbut-2-enyl diphosphate. Cys205 is a binding site for [4Fe-4S] cluster. (2E)-4-hydroxy-3-methylbut-2-enyl diphosphate is bound by residues Ser233, Ser234, Asn235, and Ser278. Dimethylallyl diphosphate contacts are provided by Ser233, Ser234, Asn235, and Ser278. Isopentenyl diphosphate-binding residues include Ser233, Ser234, Asn235, and Ser278.

It belongs to the IspH family. Requires [4Fe-4S] cluster as cofactor.

It catalyses the reaction isopentenyl diphosphate + 2 oxidized [2Fe-2S]-[ferredoxin] + H2O = (2E)-4-hydroxy-3-methylbut-2-enyl diphosphate + 2 reduced [2Fe-2S]-[ferredoxin] + 2 H(+). It carries out the reaction dimethylallyl diphosphate + 2 oxidized [2Fe-2S]-[ferredoxin] + H2O = (2E)-4-hydroxy-3-methylbut-2-enyl diphosphate + 2 reduced [2Fe-2S]-[ferredoxin] + 2 H(+). Its pathway is isoprenoid biosynthesis; dimethylallyl diphosphate biosynthesis; dimethylallyl diphosphate from (2E)-4-hydroxy-3-methylbutenyl diphosphate: step 1/1. The protein operates within isoprenoid biosynthesis; isopentenyl diphosphate biosynthesis via DXP pathway; isopentenyl diphosphate from 1-deoxy-D-xylulose 5-phosphate: step 6/6. Functionally, catalyzes the conversion of 1-hydroxy-2-methyl-2-(E)-butenyl 4-diphosphate (HMBPP) into a mixture of isopentenyl diphosphate (IPP) and dimethylallyl diphosphate (DMAPP). Acts in the terminal step of the DOXP/MEP pathway for isoprenoid precursor biosynthesis. The protein is 4-hydroxy-3-methylbut-2-enyl diphosphate reductase of Brucella suis biovar 1 (strain 1330).